The sequence spans 46 residues: Denclatoxin-B (46 aa).

Disulfide bonds link cysteine 3–cysteine 40, cysteine 4–cysteine 32, and cysteine 16–cysteine 26.

The protein belongs to the plant thionin (TC 1.C.44) family.

Its subcellular location is the secreted. Functionally, thionins are small plant proteins which are toxic to animal cells. They seem to exert their toxic effect at the level of the cell membrane. Their precise function is not known. In Dendrophthora clavata (Columbian mistletoe), this protein is Denclatoxin-B.